Consider the following 206-residue polypeptide: SOSS complex subunit B2 (206 aa).

The segment at residues 26 to 89 (IVLEIGRVTK…SMWKGCLTLY (64 aa)) is a DNA-binding region (OB). Disordered stretches follow at residues 114-146 (EPNP…GTGT) and 166-206 (SYAG…AFKR). Positions 181–196 (LPGTANNQTVMTTISN) are enriched in polar residues.

It belongs to the SOSS-B family. SOSS-B2 subfamily. In terms of assembly, component of the SOSS complex, composed of SOSS-B (SOSS-B1/NABP2 or SOSS-B2/NABP1), SOSS-A/INTS3 and SOSS-C/INIP. SOSS complexes containing SOSS-B1/NABP2 are more abundant than complexes containing SOSS-B2/NABP1.

It is found in the nucleus. Its function is as follows. Component of the SOSS complex, a multiprotein complex that functions downstream of the MRN complex to promote DNA repair and G2/M checkpoint. In the SOSS complex, acts as a sensor of single-stranded DNA that binds to single-stranded DNA, in particular to polypyrimidines. The SOSS complex associates with DNA lesions and influences diverse endpoints in the cellular DNA damage response including cell-cycle checkpoint activation, recombinational repair and maintenance of genomic stability. Required for efficient homologous recombination-dependent repair of double-strand breaks (DSBs) and ATM-dependent signaling pathways. The protein is SOSS complex subunit B2 (NABP1) of Bos taurus (Bovine).